We begin with the raw amino-acid sequence, 420 residues long: Gamma-glutamyl phosphate reductase (420 aa).

Belongs to the gamma-glutamyl phosphate reductase family.

It localises to the cytoplasm. It catalyses the reaction L-glutamate 5-semialdehyde + phosphate + NADP(+) = L-glutamyl 5-phosphate + NADPH + H(+). Its pathway is amino-acid biosynthesis; L-proline biosynthesis; L-glutamate 5-semialdehyde from L-glutamate: step 2/2. Catalyzes the NADPH-dependent reduction of L-glutamate 5-phosphate into L-glutamate 5-semialdehyde and phosphate. The product spontaneously undergoes cyclization to form 1-pyrroline-5-carboxylate. The protein is Gamma-glutamyl phosphate reductase of Neisseria gonorrhoeae (strain ATCC 700825 / FA 1090).